Consider the following 295-residue polypeptide: Perivine-Nbeta-methyltransferase (295 aa).

The interval 76–85 (ILDVGCGKGG) is SAM motif I. Residues 138 to 144 (DGSFELI) carry the Vacuolar targeting signal motif. Positions 139–147 (GSFELIFVI) are SAM motif II. The SAM motif III stretch occupies residues 166-175 (VAAPGAQIVI).

The protein belongs to the class I-like SAM-binding methyltransferase superfamily. gTMT family. As to quaternary structure, homodimer. In terms of tissue distribution, mainly expressed in young leaves, and, to a lower extent, in mature leaves, flowers, stems and roots (at protein level). Transcripts levels are highest in flowers, moderate in leaves and low in roots and stems.

It is found in the vacuole membrane. It catalyses the reaction perivine + S-adenosyl-L-methionine = vobasine + S-adenosyl-L-homocysteine + 2 H(+). The protein operates within alkaloid biosynthesis; vindoline biosynthesis. S-adenosyl-L-methionine-dependent N-methyltransferase involved in the biosynthesis of biologically active monoterpenoid indole alkaloids (MIAs) natural products including vindoline. Catalyzes the conversion of perivine to Nbeta-methylperivine (vobasine) by methylating its N4 nitrogen. Inactive with picrinine as substrate. This chain is Perivine-Nbeta-methyltransferase, found in Catharanthus roseus (Madagascar periwinkle).